A 479-amino-acid polypeptide reads, in one-letter code: Proline--tRNA ligase (479 aa).

It belongs to the class-II aminoacyl-tRNA synthetase family. ProS type 3 subfamily. Homodimer.

The protein resides in the cytoplasm. The enzyme catalyses tRNA(Pro) + L-proline + ATP = L-prolyl-tRNA(Pro) + AMP + diphosphate. Its function is as follows. Catalyzes the attachment of proline to tRNA(Pro) in a two-step reaction: proline is first activated by ATP to form Pro-AMP and then transferred to the acceptor end of tRNA(Pro). This is Proline--tRNA ligase from Lachnospira eligens (strain ATCC 27750 / DSM 3376 / VPI C15-48 / C15-B4) (Eubacterium eligens).